We begin with the raw amino-acid sequence, 110 residues long: Nucleoid-associated protein Mkms_4993 (110 aa).

Belongs to the YbaB/EbfC family. In terms of assembly, homodimer.

It is found in the cytoplasm. Its subcellular location is the nucleoid. Binds to DNA and alters its conformation. May be involved in regulation of gene expression, nucleoid organization and DNA protection. In Mycobacterium sp. (strain KMS), this protein is Nucleoid-associated protein Mkms_4993.